Reading from the N-terminus, the 200-residue chain is Small ribosomal subunit protein uS4 (200 aa).

Residues 106-170 form the S4 RNA-binding domain; the sequence is RRLQTIVFKK…SPIANELHPI (65 aa). A disordered region spans residues 178–200; it reads AERVKEEAEKEAAASEDGGEQDE. Residues 179 to 190 are compositionally biased toward basic and acidic residues; the sequence is ERVKEEAEKEAA.

This sequence belongs to the universal ribosomal protein uS4 family. As to quaternary structure, part of the 30S ribosomal subunit. Contacts protein S5. The interaction surface between S4 and S5 is involved in control of translational fidelity.

Its function is as follows. One of the primary rRNA binding proteins, it binds directly to 16S rRNA where it nucleates assembly of the body of the 30S subunit. With S5 and S12 plays an important role in translational accuracy. This Thermoplasma volcanium (strain ATCC 51530 / DSM 4299 / JCM 9571 / NBRC 15438 / GSS1) protein is Small ribosomal subunit protein uS4.